We begin with the raw amino-acid sequence, 453 residues long: Chromosomal replication initiator protein DnaA (453 aa).

Residues 1–73 (MSKEEIWDKV…ADLIEKAIGT (73 aa)) are domain I, interacts with DnaA modulators. The interval 73–114 (TKLMPNFVIQEDLTEDKQVKDSAKAKSEAKPDVQAPQNSSED) is domain II. Basic and acidic residues predominate over residues 91-103 (VKDSAKAKSEAKP). The tract at residues 91–113 (VKDSAKAKSEAKPDVQAPQNSSE) is disordered. The interval 115–331 (QFNVHNTFET…GALTRVIAYS (217 aa)) is domain III, AAA+ region. ATP-binding residues include Gly159, Gly161, Lys162, and Thr163. The domain IV, binds dsDNA stretch occupies residues 332 to 453 (RLQNEAITTE…ENLEKEIRNQ (122 aa)).

The protein belongs to the DnaA family. Oligomerizes as a right-handed, spiral filament on DNA at oriC.

The protein localises to the cytoplasm. In terms of biological role, plays an essential role in the initiation and regulation of chromosomal replication. ATP-DnaA binds to the origin of replication (oriC) to initiate formation of the DNA replication initiation complex once per cell cycle. Binds the DnaA box (a 9 base pair repeat at the origin) and separates the double-stranded (ds)DNA. Forms a right-handed helical filament on oriC DNA; dsDNA binds to the exterior of the filament while single-stranded (ss)DNA is stabiized in the filament's interior. The ATP-DnaA-oriC complex binds and stabilizes one strand of the AT-rich DNA unwinding element (DUE), permitting loading of DNA polymerase. After initiation quickly degrades to an ADP-DnaA complex that is not apt for DNA replication. Binds acidic phospholipids. This chain is Chromosomal replication initiator protein DnaA, found in Staphylococcus carnosus (strain TM300).